We begin with the raw amino-acid sequence, 495 residues long: MKYKDLRDFLALLEAKGELKRIHQTIDPFLEMTEISDRTLQAQGPALLFEKPKGHAMPVLCNLFGTTQRVAMGMGQKDISTLRELGQLLAFLKEPEPPKGFRDLLSKLPKFKQILNMPNKILTSAPCQEEIWKDNLDLGCLPAMHCWPGDVAPLITWGLTITRGPHKERQNLGIYRQQVLSKNKIIMRWLPHRGGALDYREWCKTNPGQPFPVAVALGADPATILGAVTPVPDTLSEYAFSGLLRGYRTEVVKCLSSDLQVPANAEIVLEGYIQPGETAEEGPYGDHTGYYNETEHFPVFTVSHITKRQDAIYHSTYTGRPPDEPSILGAALNEVFIPILQKQFPEIVDFYLPPEGCSYRLAVVTIKKQYAGHAKRVMMGVWSFLRQFMYTKFVIVCDDDINARNWNDVIWAITTRMDPARDTLLIENTPIDYLDFASPVAGLGSKMGLDATNKWSAETQRVWGRTIKMDKSVCDRIDAIWDELNIFNQQSVKKK.

A Mn(2+)-binding site is contributed by asparagine 171. Residues 174–176 (IYR), 188–190 (RWL), and 193–194 (RG) contribute to the prenylated FMN site. Glutamate 237 lines the Mn(2+) pocket. The Proton donor role is filled by aspartate 286.

Belongs to the UbiD family. Homohexamer. It depends on prenylated FMN as a cofactor. Mn(2+) is required as a cofactor.

The protein resides in the cell membrane. It catalyses the reaction a 4-hydroxy-3-(all-trans-polyprenyl)benzoate + H(+) = a 2-(all-trans-polyprenyl)phenol + CO2. The protein operates within cofactor biosynthesis; ubiquinone biosynthesis. Catalyzes the decarboxylation of 3-octaprenyl-4-hydroxy benzoate to 2-octaprenylphenol, an intermediate step in ubiquinone biosynthesis. This Hamiltonella defensa subsp. Acyrthosiphon pisum (strain 5AT) protein is 3-octaprenyl-4-hydroxybenzoate carboxy-lyase.